We begin with the raw amino-acid sequence, 443 residues long: Thymidine phosphorylase (443 aa).

It belongs to the thymidine/pyrimidine-nucleoside phosphorylase family. In terms of assembly, homodimer.

The catalysed reaction is thymidine + phosphate = 2-deoxy-alpha-D-ribose 1-phosphate + thymine. The protein operates within pyrimidine metabolism; dTMP biosynthesis via salvage pathway; dTMP from thymine: step 1/2. Its function is as follows. The enzymes which catalyze the reversible phosphorolysis of pyrimidine nucleosides are involved in the degradation of these compounds and in their utilization as carbon and energy sources, or in the rescue of pyrimidine bases for nucleotide synthesis. This chain is Thymidine phosphorylase, found in Shewanella frigidimarina (strain NCIMB 400).